The primary structure comprises 532 residues: MAKFIFVTGGVVSGLGKGITASSIGALLKASGLKVFMQKFDPYLNVDPGTMSPYQHGEVFVTKDGGETDLDLGHYERFIDEELTKLSSTTSGKIYLSVIQGERKGVNSGKTIQVVPHITDAIKQKVYQAAKQSQADVIISEIGGTVGDIESQPFIEAIRQIRLEQGKENVMFVHVVLLLWLAASKEYKTKPIQNSVKAMASLGIQPDVIVCRSDSSSPKDIKEKISLFCNVPITNIIDAIDQDSIYRVPLALAKQNLQDIIIEQLQLKAKNIDLSLWKQFNKKIDSSTEEIEISFVGKYIELQDAYLSVLESLKIAGWEFNKKIKIRWVQADKLDESNYKEVLKNSQGILVPGGFGKRGIEGMMLASRYARENDIPYLGICLGMQIATISIARDLLNWSDADSTEFNKNTTHPIFDYIKGIDRDNIGGTLRLGTMVTKLEKNSLVSKLYNSDIALERHRHRYEFNNEYKKDLESVGLRFSGIYEEKNIVEVVEMPSLKFFVASQFHPEFTSRPNKPTPLFKGFIKAIVENNK.

The interval 1-267 (MAKFIFVTGG…QDIIIEQLQL (267 aa)) is amidoligase domain. S13 contacts CTP. S13 serves as a coordination point for UTP. An ATP-binding site is contributed by 14–19 (GLGKGI). Residue Y54 participates in L-glutamine binding. D71 contacts ATP. Mg(2+) is bound by residues D71 and E141. Residues 148–150 (DIE), 188–193 (KTKPIQ), and K224 each bind CTP. UTP is bound by residues 188-193 (KTKPIQ) and K224. In terms of domain architecture, Glutamine amidotransferase type-1 spans 292–532 (EISFVGKYIE…FIKAIVENNK (241 aa)). Position 354 (G354) interacts with L-glutamine. The Nucleophile; for glutamine hydrolysis role is filled by C381. L-glutamine contacts are provided by residues 382 to 385 (LGMQ), E405, and R461. Catalysis depends on residues H506 and E508.

This sequence belongs to the CTP synthase family. As to quaternary structure, homotetramer.

It carries out the reaction UTP + L-glutamine + ATP + H2O = CTP + L-glutamate + ADP + phosphate + 2 H(+). The enzyme catalyses L-glutamine + H2O = L-glutamate + NH4(+). It catalyses the reaction UTP + NH4(+) + ATP = CTP + ADP + phosphate + 2 H(+). The protein operates within pyrimidine metabolism; CTP biosynthesis via de novo pathway; CTP from UDP: step 2/2. Allosterically activated by GTP, when glutamine is the substrate; GTP has no effect on the reaction when ammonia is the substrate. The allosteric effector GTP functions by stabilizing the protein conformation that binds the tetrahedral intermediate(s) formed during glutamine hydrolysis. Inhibited by the product CTP, via allosteric rather than competitive inhibition. Its function is as follows. Catalyzes the ATP-dependent amination of UTP to CTP with either L-glutamine or ammonia as the source of nitrogen. Regulates intracellular CTP levels through interactions with the four ribonucleotide triphosphates. This chain is CTP synthase, found in Mycoplasma mycoides subsp. mycoides SC (strain CCUG 32753 / NCTC 10114 / PG1).